The following is a 775-amino-acid chain: tRNA(Met) cytidine acetyltransferase TmcA (775 aa).

Disordered stretches follow at residues 1–33 (MPTTVSGPIKSVPGERRDRQVHTGASATTGMDI) and 191–215 (TVEQDGLTDPPPSRPVPSPTPPTDA). Residues 199–212 (DPPPSRPVPSPTPP) show a composition bias toward pro residues. Residues Gln230, 254 to 263 (GRGKSSAAGL), and Arg403 each bind ATP. The region spanning 438-623 (VEYRQLSAAD…YSVVMLDPCS (186 aa)) is the N-acetyltransferase domain. Residues 549–551 (IAT), 556–562 (RSRGLGS), and Glu588 each bind acetyl-CoA.

It belongs to the RNA cytidine acetyltransferase family. TmcA subfamily.

Its subcellular location is the cytoplasm. The catalysed reaction is cytidine(34) in elongator tRNA(Met) + acetyl-CoA + ATP + H2O = N(4)-acetylcytidine(34) in elongator tRNA(Met) + ADP + phosphate + CoA + H(+). Its function is as follows. Catalyzes the formation of N(4)-acetylcytidine (ac(4)C) at the wobble position of tRNA(Met), by using acetyl-CoA as an acetyl donor and ATP (or GTP). This Haloarcula marismortui (strain ATCC 43049 / DSM 3752 / JCM 8966 / VKM B-1809) (Halobacterium marismortui) protein is tRNA(Met) cytidine acetyltransferase TmcA.